Consider the following 151-residue polypeptide: Metalloproteinase inhibitor 3 (151 aa).

In terms of domain architecture, NTR spans 1-108 (CNSDIVIRAK…GLNYRYHLGC (108 aa)). 3 cysteine pairs are disulfide-bonded: cysteine 1-cysteine 108, cysteine 115-cysteine 120, and cysteine 128-cysteine 149. Residues 53–54 (ES) form an involved in metalloproteinase-binding region. A mediates interaction with EFEMP1 region spans residues 71 to 151 (GRVYDGKVYT…YQSKHYACIR (81 aa)).

It belongs to the protease inhibitor I35 (TIMP) family. In terms of assembly, interacts with EFEMP1.

It localises to the secreted. The protein resides in the extracellular space. The protein localises to the extracellular matrix. Complexes with metalloproteinases (such as collagenases) and irreversibly inactivates them by binding to their catalytic zinc cofactor. May form part of a tissue-specific acute response to remodeling stimuli. The protein is Metalloproteinase inhibitor 3 (TIMP3) of Oryctolagus cuniculus (Rabbit).